A 36-amino-acid polypeptide reads, in one-letter code: Amanexitide proprotein 1 (36 aa).

Positions 1–10 (MSDINTARLP) are excised as a propeptide. The segment at residues 11 to 19 (VFSLPVFFP) is a cross-link (cyclopeptide (Val-Pro)). A propeptide spanning residues 20–36 (FVSDDIQAVLTRGESLC) is cleaved from the precursor.

This sequence belongs to the MSDIN fungal toxin family. Post-translationally, processed by the macrocyclase-peptidase enzyme POPB to yield a toxic cyclic nonapeptide. POPB first removes 10 residues from the N-terminus. Conformational trapping of the remaining peptide forces the enzyme to release this intermediate rather than proceed to macrocyclization. The enzyme rebinds the remaining peptide in a different conformation and catalyzes macrocyclization of the N-terminal 9 residues. As to expression, expressed in basidiocarps.

In terms of biological role, cyclic nonapeptide that belongs to the MSDIN-like toxin family responsible for a large number of food poisoning cases and deaths. This chain is Amanexitide proprotein 1, found in Amanita exitialis (Guangzhou destroying angel).